The primary structure comprises 294 residues: Pyrroline-5-carboxylate reductase (294 aa).

The protein belongs to the pyrroline-5-carboxylate reductase family.

The protein resides in the cytoplasm. It carries out the reaction L-proline + NADP(+) = (S)-1-pyrroline-5-carboxylate + NADPH + 2 H(+). The catalysed reaction is L-proline + NAD(+) = (S)-1-pyrroline-5-carboxylate + NADH + 2 H(+). The protein operates within amino-acid biosynthesis; L-proline biosynthesis; L-proline from L-glutamate 5-semialdehyde: step 1/1. Its function is as follows. Catalyzes the reduction of 1-pyrroline-5-carboxylate (PCA) to L-proline. The sequence is that of Pyrroline-5-carboxylate reductase from Mycobacterium leprae (strain TN).